Here is a 397-residue protein sequence, read N- to C-terminus: Tryptophan synthase beta chain (397 aa).

At K90 the chain carries N6-(pyridoxal phosphate)lysine.

This sequence belongs to the TrpB family. In terms of assembly, tetramer of two alpha and two beta chains. Requires pyridoxal 5'-phosphate as cofactor.

The catalysed reaction is (1S,2R)-1-C-(indol-3-yl)glycerol 3-phosphate + L-serine = D-glyceraldehyde 3-phosphate + L-tryptophan + H2O. Its pathway is amino-acid biosynthesis; L-tryptophan biosynthesis; L-tryptophan from chorismate: step 5/5. In terms of biological role, the beta subunit is responsible for the synthesis of L-tryptophan from indole and L-serine. In Nitrosomonas europaea (strain ATCC 19718 / CIP 103999 / KCTC 2705 / NBRC 14298), this protein is Tryptophan synthase beta chain.